Here is a 249-residue protein sequence, read N- to C-terminus: MGETATLVLLRHGESEWNSLNLFTGWVDVGLTDKGRAEAVRSGELLAEQGLLPDALYTSLLRRAITTAHLALDAADRLWIPVRRSWRLNERHYGALQGLDKAETKARYGEEQFMAWRRSYDTPPPPIERGSTYSQDADPRYADIGGGPLTECLADVVVRFLPYFTDVIVPDLRSGKTVLIVAHGNSLRALVKHLDQMSDDDVVGLNIPTGIPLRYDLDARLRPLVPGGTYLDPEAAAAGAAAVASQGRG.

Residues 11–18 (RHGESEWN), 24–25 (TG), Arg63, 90–93 (ERHY), Lys101, and 117–118 (RR) contribute to the substrate site. The active-site Tele-phosphohistidine intermediate is His12. Residue Glu90 is the Proton donor/acceptor of the active site. The disordered stretch occupies residues 119–138 (SYDTPPPPIERGSTYSQDAD). A substrate-binding site is contributed by 184–185 (GN).

The protein belongs to the phosphoglycerate mutase family. BPG-dependent PGAM subfamily.

It catalyses the reaction (2R)-2-phosphoglycerate = (2R)-3-phosphoglycerate. Its pathway is carbohydrate degradation; glycolysis; pyruvate from D-glyceraldehyde 3-phosphate: step 3/5. Its function is as follows. Catalyzes the interconversion of 2-phosphoglycerate and 3-phosphoglycerate. The polypeptide is 2,3-bisphosphoglycerate-dependent phosphoglycerate mutase (Mycolicibacterium paratuberculosis (strain ATCC BAA-968 / K-10) (Mycobacterium paratuberculosis)).